The sequence spans 907 residues: Clathrin coat assembly protein AP180 (907 aa).

Positions 14 to 145 constitute an ENTH domain; it reads QYSVTGSAVA…FSYRQMAFDF (132 aa). 4 disordered regions span residues 285–326, 342–380, 393–414, and 505–525; these read LEGK…DTSP, TSKPSSDLLDLQPDFSSGGAAAAAAPAPPPPAGGATAWG, SVPSEAQISDPFAPEPTPPTTT, and VPVVTPTASTAPPVPATAPSP. Residues serine 296, serine 300, and serine 306 each carry the phosphoserine modification. Over residues 302–324 the composition is skewed to polar residues; that stretch reads LSKSSPATTVTSPNSTPAKTIDT. An O-linked (GlcNAc) threonine glycan is attached at threonine 310. Serine 313 carries the post-translational modification Phosphoserine. Threonine 317 carries the phosphothreonine modification. Over residues 505–515 the composition is skewed to low complexity; it reads VPVVTPTASTA. Positions 516-525 are enriched in pro residues; sequence PPVPATAPSP. Phosphoserine occurs at positions 596, 602, 623, 629, and 763. Arginine 865 carries the asymmetric dimethylarginine; alternate modification. Residue arginine 865 is modified to Omega-N-methylarginine; alternate. A disordered region spans residues 867–907; it reads PFGAAAVPGTQLSPSPTPASQSPKKPPAKDPLADLNIKDFL. Basic and acidic residues predominate over residues 893–907; that stretch reads PAKDPLADLNIKDFL.

This sequence belongs to the PICALM/SNAP91 family. Binds AP2A2. Interacts with AP2B1; clathrin competes with SNAP91. Thr-310 can be modified by the addition of N-acetylglucosamine which can be further phosphorylated. There is no evidence for direct Thr-310 phosphorylation.

It localises to the cell membrane. The protein resides in the membrane. Its subcellular location is the coated pit. Its function is as follows. Adaptins are components of the adapter complexes which link clathrin to receptors in coated vesicles. Clathrin-associated protein complexes are believed to interact with the cytoplasmic tails of membrane proteins, leading to their selection and concentration. Binding of AP180 to clathrin triskelia induces their assembly into 60-70 nm coats. The sequence is that of Clathrin coat assembly protein AP180 (SNAP91) from Homo sapiens (Human).